Reading from the N-terminus, the 372-residue chain is tRNA-specific 2-thiouridylase MnmA (372 aa).

ATP-binding positions include 16 to 23 and Met42; that span reads GMSGGVDS. An interaction with target base in tRNA region spans residues 102 to 104; the sequence is NPD. The active-site Nucleophile is Cys107. A disulfide bond links Cys107 and Cys205. Gly132 is an ATP binding site. Residues 155-157 are interaction with tRNA; the sequence is KDQ. Cys205 (cysteine persulfide intermediate) is an active-site residue. Residues 317-318 are interaction with tRNA; the sequence is RY.

The protein belongs to the MnmA/TRMU family.

Its subcellular location is the cytoplasm. The enzyme catalyses S-sulfanyl-L-cysteinyl-[protein] + uridine(34) in tRNA + AH2 + ATP = 2-thiouridine(34) in tRNA + L-cysteinyl-[protein] + A + AMP + diphosphate + H(+). In terms of biological role, catalyzes the 2-thiolation of uridine at the wobble position (U34) of tRNA, leading to the formation of s(2)U34. The protein is tRNA-specific 2-thiouridylase MnmA of Shewanella baltica (strain OS195).